We begin with the raw amino-acid sequence, 225 residues long: C-reactive protein (225 aa).

A signal peptide spans 1–19 (MEKLLWCLLIMISFSRTFG). The region spanning 24-225 (FKKAFVFPKE…DVFIKPQLWS (202 aa)) is the Pentraxin (PTX) domain. An intrachain disulfide couples Cys55 to Cys116. The Ca(2+) site is built by Asn80, Glu157, Gln158, Asp159, and Gln169.

This sequence belongs to the pentraxin family. Homopentamer. Pentraxin (or pentaxin) have a discoid arrangement of 5 non-covalently bound subunits. Interacts with FCN1; may regulate monocyte activation by FCN1. The cofactor is Ca(2+). Found in plasma.

It is found in the secreted. Functionally, displays several functions associated with host defense: it promotes agglutination, bacterial capsular swelling, phagocytosis and complement fixation through its calcium-dependent binding to phosphorylcholine. Can interact with DNA and histones and may scavenge nuclear material released from damaged circulating cells. This chain is C-reactive protein (Crp), found in Mus musculus (Mouse).